Reading from the N-terminus, the 337-residue chain is MLEKFERYPLTFGLTPIEKLDRLGKHLGGKVEIYAKREDCNSGLAFGGNKLRKLEYVIPDAIASDADTLVTVGGVQSNHTRMVAAVAAKIGMKCLLVHESWVPHEDVVYDRVGNILLSRILGAEVRLVDDGFDIGIRRSWEKALYEVKARGGRPYAIPAGASVHPNGGLGYVGFAEEVRAQEEQLGFAFDYMVVCTVTGSTHAGMLVGFAKDGRQRNVIGIDASATPAKTKAQVLSIARHTATLVELGSELAEDDVVLLEDYAHPRYGIPSEETKEAIRLCARLEGMITDPVYEGKSMQGMIDLVQKGFFPAGSRILYAHLGGAPAINGYGYTFRNG.

Lysine 50 is subject to N6-(pyridoxal phosphate)lysine.

Belongs to the ACC deaminase/D-cysteine desulfhydrase family. As to quaternary structure, homotrimer. The cofactor is pyridoxal 5'-phosphate.

It catalyses the reaction 1-aminocyclopropane-1-carboxylate + H2O = 2-oxobutanoate + NH4(+). Its function is as follows. Catalyzes a cyclopropane ring-opening reaction, the irreversible conversion of 1-aminocyclopropane-1-carboxylate (ACC) to ammonia and alpha-ketobutyrate. Allows growth on ACC as a nitrogen source. This is 1-aminocyclopropane-1-carboxylate deaminase from Mesorhizobium japonicum (strain LMG 29417 / CECT 9101 / MAFF 303099) (Mesorhizobium loti (strain MAFF 303099)).